Reading from the N-terminus, the 275-residue chain is NH(3)-dependent NAD(+) synthetase (275 aa).

50-57 lines the ATP pocket; that stretch reads GISGGVDS. Aspartate 56 provides a ligand contact to Mg(2+). Arginine 147 contributes to the deamido-NAD(+) binding site. Threonine 167 contacts ATP. Glutamate 172 contributes to the Mg(2+) binding site. Lysine 180 and aspartate 187 together coordinate deamido-NAD(+). The ATP site is built by lysine 196 and threonine 218. Residue 267 to 268 participates in deamido-NAD(+) binding; it reads HK.

Belongs to the NAD synthetase family. Homodimer.

The catalysed reaction is deamido-NAD(+) + NH4(+) + ATP = AMP + diphosphate + NAD(+) + H(+). It participates in cofactor biosynthesis; NAD(+) biosynthesis; NAD(+) from deamido-NAD(+) (ammonia route): step 1/1. In terms of biological role, catalyzes the ATP-dependent amidation of deamido-NAD to form NAD. Uses ammonia as a nitrogen source. The polypeptide is NH(3)-dependent NAD(+) synthetase (Pseudomonas putida (strain ATCC 700007 / DSM 6899 / JCM 31910 / BCRC 17059 / LMG 24140 / F1)).